The chain runs to 98 residues: Small ribosomal subunit protein uS19 (98 aa).

A disordered region spans residues 77–98; the sequence is TRTFRGHAGGKAEKGGSAPRKK.

Belongs to the universal ribosomal protein uS19 family.

In terms of biological role, protein S19 forms a complex with S13 that binds strongly to the 16S ribosomal RNA. The polypeptide is Small ribosomal subunit protein uS19 (Chlorobium limicola (strain DSM 245 / NBRC 103803 / 6330)).